Reading from the N-terminus, the 150-residue chain is NmrA-like family domain-containing protein 1 (150 aa).

NADP(+) is bound by residues 7–12, 33–37, and Lys-71; these read GATGAQ and RNPEQ.

It belongs to the NmrA-type oxidoreductase family. Homodimer. Interacts with ASS1. Interaction is enhanced by low NADPH/NADP(+) ratios, which results in inhibition of ASS1 activity.

The protein resides in the cytoplasm. It is found in the perinuclear region. It localises to the nucleus. In terms of biological role, redox sensor protein. Undergoes restructuring and subcellular redistribution in response to changes in intracellular NADPH/NADP(+) levels. At low NADPH concentrations the protein is found mainly as a monomer, and binds argininosuccinate synthase (ASS1), the enzyme involved in nitric oxide synthesis. Association with ASS1 impairs its activity and reduces the production of nitric oxide, which subsecuently prevents apoptosis. Under normal NADPH concentrations, the protein is found as a dimer and hides the binding site for ASS1. The homodimer binds one molecule of NADPH. Has higher affinity for NADPH than for NADP(+). Binding to NADPH is necessary to form a stable dimer. This chain is NmrA-like family domain-containing protein 1, found in Rattus norvegicus (Rat).